The following is a 281-amino-acid chain: Very long chain fatty acid elongase 7 (281 aa).

The residue at position 2 (Ala2) is an N-acetylalanine. Over 2 to 27 the chain is Lumenal; that stretch reads AFSDLTSRTVRLYDNWIKDADPRVED. The chain crosses the membrane as a helical span at residues 28–48; sequence WLLMSSPLPQTIILGFYVYFV. The Cytoplasmic portion of the chain corresponds to 49-66; the sequence is TSLGPKLMENRKPFELKK. The helical transmembrane segment at 67–87 threads the bilayer; that stretch reads VMITYNFSIVLFSVYMFYEFI. Residues 88 to 115 are Lumenal-facing; sequence MSGWGTGYSFRCDIVDYSQSPTALRMVR. Residues Cys99 and Cys231 are joined by a disulfide bond. Residues 116–136 traverse the membrane as a helical segment; sequence TCWLYYFSKFIELLDTIFFIL. Positions 124, 137, 139, 142, and 147 each coordinate 3-oxoeicosanoyl-CoA. At 137 to 142 the chain is on the cytoplasmic side; that stretch reads RKKNSQ. A helical membrane pass occupies residues 143-162; it reads VTFLHVFHHTIMPWTWWFGV. The short motif at 147-151 is the HxxHH motif element; the sequence is HVFHH. The Nucleophile role is filled by His150. The Lumenal segment spans residues 163–171; it reads KFAAGGLGT. Residues 172–194 traverse the membrane as a helical segment; that stretch reads FHAFLNTAVHVVMYSYYGLCALG. Residues Tyr187, Lys204, Thr208, and Gln211 each contribute to the 3-oxoeicosanoyl-CoA site. The Cytoplasmic segment spans residues 195 to 206; it reads PDYQKYLWWKKY. Residues 207-227 traverse the membrane as a helical segment; sequence LTSLQLIQFVLITIHISQFFF. The Lumenal portion of the chain corresponds to 228–236; that stretch reads MEDCKYQFP. A helical transmembrane segment spans residues 237–257; that stretch reads VFQYIIMSYGCIFLLLFLHFW. Topologically, residues 258-281 are cytoplasmic; that stretch reads YRAYTKGQRLPKTVKHGICKNKDH. Position 266 (Arg266) interacts with 3-oxoeicosanoyl-CoA. Residues 277–281 carry the Di-lysine motif motif; the sequence is KNKDH.

The protein belongs to the ELO family. ELOVL7 subfamily. Homodimer. Interacts with TECR.

The protein resides in the endoplasmic reticulum membrane. It catalyses the reaction a very-long-chain acyl-CoA + malonyl-CoA + H(+) = a very-long-chain 3-oxoacyl-CoA + CO2 + CoA. The catalysed reaction is eicosanoyl-CoA + malonyl-CoA + H(+) = 3-oxodocosanoyl-CoA + CO2 + CoA. The enzyme catalyses (5Z,8Z,11Z,14Z)-eicosatetraenoyl-CoA + malonyl-CoA + H(+) = (7Z,10Z,13Z,16Z)-3-oxodocosatetraenoyl-CoA + CO2 + CoA. It carries out the reaction (6Z,9Z,12Z)-octadecatrienoyl-CoA + malonyl-CoA + H(+) = (8Z,11Z,14Z)-3-oxoeicosatrienoyl-CoA + CO2 + CoA. It catalyses the reaction (9Z,12Z)-octadecadienoyl-CoA + malonyl-CoA + H(+) = (11Z,14Z)-3-oxoicosa-11,14-dienoyl-CoA + CO2 + CoA. The catalysed reaction is (9Z)-octadecenoyl-CoA + malonyl-CoA + H(+) = 3-oxo-(11Z)-eicosenoyl-CoA + CO2 + CoA. The enzyme catalyses octadecanoyl-CoA + malonyl-CoA + H(+) = 3-oxoeicosanoyl-CoA + CO2 + CoA. It carries out the reaction hexadecanoyl-CoA + malonyl-CoA + H(+) = 3-oxooctadecanoyl-CoA + CO2 + CoA. It catalyses the reaction (9Z,12Z,15Z)-octadecatrienoyl-CoA + malonyl-CoA + H(+) = (11Z,14Z,17Z)-3-oxoeicosatrienoyl-CoA + CO2 + CoA. It functions in the pathway lipid metabolism; fatty acid biosynthesis. Its function is as follows. Catalyzes the first and rate-limiting reaction of the four reactions that constitute the long-chain fatty acids elongation cycle. This endoplasmic reticulum-bound enzymatic process allows the addition of 2 carbons to the chain of long- and very long-chain fatty acids (VLCFAs) per cycle. Condensing enzyme with higher activity toward C18 acyl-CoAs, especially C18:3(n-3) acyl-CoAs and C18:3(n-6)-CoAs. Also active toward C20:4-, C18:0-, C18:1-, C18:2- and C16:0-CoAs, and weakly toward C20:0-CoA. Little or no activity toward C22:0-, C24:0-, or C26:0-CoAs. May participate in the production of saturated and polyunsaturated VLCFAs of different chain lengths that are involved in multiple biological processes as precursors of membrane lipids and lipid mediators. In Bos taurus (Bovine), this protein is Very long chain fatty acid elongase 7.